Consider the following 575-residue polypeptide: Dihydroxy-acid dehydratase (575 aa).

Cys-64 lines the [2Fe-2S] cluster pocket. Asp-96 is a Mg(2+) binding site. [2Fe-2S] cluster is bound at residue Cys-137. Mg(2+)-binding residues include Asp-138 and Lys-139. Lys-139 is modified (N6-carboxylysine). Residue Cys-214 participates in [2Fe-2S] cluster binding. Mg(2+) is bound at residue Glu-465. Ser-491 serves as the catalytic Proton acceptor.

This sequence belongs to the IlvD/Edd family. In terms of assembly, homodimer. [2Fe-2S] cluster serves as cofactor. The cofactor is Mg(2+).

It catalyses the reaction (2R)-2,3-dihydroxy-3-methylbutanoate = 3-methyl-2-oxobutanoate + H2O. It carries out the reaction (2R,3R)-2,3-dihydroxy-3-methylpentanoate = (S)-3-methyl-2-oxopentanoate + H2O. It functions in the pathway amino-acid biosynthesis; L-isoleucine biosynthesis; L-isoleucine from 2-oxobutanoate: step 3/4. Its pathway is amino-acid biosynthesis; L-valine biosynthesis; L-valine from pyruvate: step 3/4. Functions in the biosynthesis of branched-chain amino acids. Catalyzes the dehydration of (2R,3R)-2,3-dihydroxy-3-methylpentanoate (2,3-dihydroxy-3-methylvalerate) into 2-oxo-3-methylpentanoate (2-oxo-3-methylvalerate) and of (2R)-2,3-dihydroxy-3-methylbutanoate (2,3-dihydroxyisovalerate) into 2-oxo-3-methylbutanoate (2-oxoisovalerate), the penultimate precursor to L-isoleucine and L-valine, respectively. The polypeptide is Dihydroxy-acid dehydratase (Mycobacterium bovis (strain ATCC BAA-935 / AF2122/97)).